The following is a 319-amino-acid chain: MAESWLLLLLALGCPALPTEVTTLLRPAQQGMGSTPFPSLAPPITLLVDGKQQTLVVCLVLDVAPPGFESPIWFSAGNGSSLDAFTYGPSPAEDGTWTRLAQLSLYSEELAAWDTLVCHTGPGAGDHGQSTQPLQLSGDASSARTCLWEPLRGTRALVLRLGALRLLLFKLLLLDVLLTCGRLHAPPAARGDPAGASGPGAPSLPAPHEVPRADSRLLPQPPPPRGSSSGPADRIRRNHGGTTGRGLSVSASPPLEPRDRRRRVHTRRPRRDPRNPVWEEGPPVLRAWSSGPSFSLSTSSLGAFLCNLPPPADPSFPGG.

A signal peptide spans 1-16 (MAESWLLLLLALGCPA). Residues 17-160 (LPTEVTTLLR…LRGTRALVLR (144 aa)) lie on the Extracellular side of the membrane. C58 and C118 are joined by a disulfide. N78 carries an N-linked (GlcNAc...) asparagine glycan. The helical transmembrane segment at 161–181 (LGALRLLLFKLLLLDVLLTCG) threads the bilayer. At 182-319 (RLHAPPAARG…PPADPSFPGG (138 aa)) the chain is on the cytoplasmic side. Low complexity predominate over residues 189–207 (ARGDPAGASGPGAPSLPAP). The segment at 189-293 (ARGDPAGASG…VLRAWSSGPS (105 aa)) is disordered. The span at 260 to 271 (RRRRVHTRRPRR) shows a compositional bias: basic residues.

As to quaternary structure, heterodimer with TCRB; disulfide linked. This heterodimer assembles with CD3 proteins into a signaling-competent pre-T-cell receptor complex. Interacts with RHBDD1.

Its subcellular location is the membrane. It localises to the cell membrane. In terms of biological role, component of the pre-T-cell receptor complex (composed of PTCRA, TCRB and the CD3 complex) that has a crucial role in early T-cell development, particularly alpha-beta T cell differentiation. This Bos taurus (Bovine) protein is Pre T-cell antigen receptor alpha (PTCRA).